Reading from the N-terminus, the 168-residue chain is Zinc finger A20 and AN1 domain-containing stress-associated protein 1 (168 aa).

The A20-type zinc finger occupies 13–47; the sequence is PSEPKLCVKGCGFFGSPSNMNLCSKCYRDIRATEE. Cys-19, Cys-23, Cys-35, and Cys-38 together coordinate Zn(2+). The tract at residues 49-105 is disordered; that stretch reads TASAKAAVEKSLNPNKPKTQPQQSQEITQGVLGSGSSSSSTRGGDSAAAPLDPPKST. Residues 60–76 show a composition bias toward polar residues; it reads LNPNKPKTQPQQSQEIT. Over residues 82-94 the composition is skewed to low complexity; the sequence is SGSSSSSTRGGDS. The AN1-type zinc finger occupies 103 to 149; the sequence is KSTATRCLSCNKKVGVTGFKCRCGSTFCGTHRYPESHECQFDFKGVA. Zn(2+) contacts are provided by Cys-109, Cys-112, Cys-123, Cys-125, Cys-130, His-133, His-139, and Cys-141.

Its function is as follows. May be involved in environmental stress response. The chain is Zinc finger A20 and AN1 domain-containing stress-associated protein 1 (SAP1) from Arabidopsis thaliana (Mouse-ear cress).